We begin with the raw amino-acid sequence, 146 residues long: uncharacterized protein (146 aa).

This is an uncharacterized protein from Sinorhizobium fredii (strain NBRC 101917 / NGR234).